A 320-amino-acid polypeptide reads, in one-letter code: Probable cell division protein WhiA (320 aa).

Residues 276 to 310 constitute a DNA-binding region (H-T-H motif); sequence TLKELGEMVAGGKISKSGINHRLRKIDEIAERLRA.

This sequence belongs to the WhiA family.

Involved in cell division and chromosome segregation. The chain is Probable cell division protein WhiA from Geobacillus thermodenitrificans (strain NG80-2).